A 449-amino-acid chain; its full sequence is Kynurenine 3-monooxygenase (449 aa).

This sequence belongs to the aromatic-ring hydroxylase family. KMO subfamily. FAD serves as cofactor.

It catalyses the reaction L-kynurenine + NADPH + O2 + H(+) = 3-hydroxy-L-kynurenine + NADP(+) + H2O. It participates in cofactor biosynthesis; NAD(+) biosynthesis; quinolinate from L-kynurenine: step 1/3. In terms of biological role, catalyzes the hydroxylation of L-kynurenine (L-Kyn) to form 3-hydroxy-L-kynurenine (L-3OHKyn). Required for synthesis of quinolinic acid. The chain is Kynurenine 3-monooxygenase from Legionella pneumophila (strain Corby).